The sequence spans 205 residues: Inactive ribonuclease-like protein 9 (205 aa).

A signal peptide spans methionine 1–phenylalanine 24. Cystine bridges form between cysteine 97-cysteine 152, cysteine 115-cysteine 167, and cysteine 122-cysteine 129. N-linked (GlcNAc...) asparagine glycans are attached at residues asparagine 130 and asparagine 142.

The protein belongs to the pancreatic ribonuclease family.

It is found in the secreted. Its function is as follows. Does not exhibit any ribonuclease activity. The polypeptide is Inactive ribonuclease-like protein 9 (RNASE9) (Cebus albifrons (White-fronted capuchin)).